An 81-amino-acid chain; its full sequence is MAHTVKIYDTCIGCTQCVRACPTDVLEMVPWDGCRANQIASAPRTEDCVGCKRCESACPTDFLSIRVYLGAETTRSMGLGY.

4Fe-4S ferredoxin-type domains are found at residues 2–31 and 39–68; these read AHTVKIYDTCIGCTQCVRACPTDVLEMVPW and IASAPRTEDCVGCKRCESACPTDFLSIRVY. [4Fe-4S] cluster is bound by residues C11, C14, C17, C21, C48, C51, C54, and C58.

In terms of assembly, the eukaryotic PSI reaction center is composed of at least 11 subunits. [4Fe-4S] cluster is required as a cofactor.

It localises to the plastid. The protein resides in the cyanelle thylakoid membrane. It carries out the reaction reduced [plastocyanin] + hnu + oxidized [2Fe-2S]-[ferredoxin] = oxidized [plastocyanin] + reduced [2Fe-2S]-[ferredoxin]. Apoprotein for the two 4Fe-4S centers FA and FB of photosystem I (PSI); essential for photochemical activity. FB is the terminal electron acceptor of PSI, donating electrons to ferredoxin. The C-terminus interacts with PsaA/B/D and helps assemble the protein into the PSI complex. Required for binding of PsaD and PsaE to PSI. PSI is a cytochrome c6-ferredoxin oxidoreductase, converting photonic excitation into a charge separation, which transfers an electron from the donor P700 chlorophyll pair to the spectroscopically characterized acceptors A0, A1, FX, FA and FB in turn. The polypeptide is Photosystem I iron-sulfur center (Cyanophora paradoxa).